Here is a 1201-residue protein sequence, read N- to C-terminus: Period circadian protein homolog 3 (1201 aa).

The interval 1 to 50 (MPRGEAPGPGRRGAKDEALGEESGERWSPEFHLQRKLADSSHSEQQDRNR) is disordered. Residues 13–50 (GAKDEALGEESGERWSPEFHLQRKLADSSHSEQQDRNR) are compositionally biased toward basic and acidic residues. Residues 55–64 (LIMVVQEMKK) carry the Nuclear export signal 1 motif. PAS domains are found at residues 121–188 (IASE…RAQL) and 262–328 (YEAP…KVLK). Positions 337–380 (HSPIRFCTQNGDYIILDSSWSSFVNPWSRKISFIIGRHKVRTSP) constitute a PAC domain. Residues 403–412 (LQEQIYKLLL) carry the Nuclear export signal 3 motif. The segment at 555-760 (LKRKCISCTN…SSSNTGSGPR (206 aa)) is CSNK1E binding domain. 2 disordered regions span residues 717–788 (YSYF…FPPA) and 881–923 (PSMS…RSSS). Residues 721-731 (QGDSTSKQTRS) are compositionally biased toward polar residues. Positions 729-745 (TRSAGCRKGKHKRKKLP) match the Nuclear localization signal motif. Residues 733-743 (GCRKGKHKRKK) are compositionally biased toward basic residues. Low complexity-rich tracts occupy residues 767-783 (AQPCCPSAASSPHTSSP) and 881-890 (PSMSSAMSPT). The segment covering 900–911 (QRREEEKWEAQS) has biased composition (basic and acidic residues). Ser-919 carries the phosphoserine modification. Residues 925-932 (LQLNLLQE) carry the Nuclear export signal 2 motif. A disordered region spans residues 952–1067 (TEYCVTGNNG…GSAASGSSDS (116 aa)). Composition is skewed to polar residues over residues 957–976 (TGNNGSESSPATTGALSTGS), 983–994 (SHPTASALSTGS), 1001–1012 (SHPTASALSTGS), and 1035–1050 (TPSHPTATVLSTGSPP). Repeat copies occupy residues 965–982 (SPATTGALSTGSPPRENP), 983–1000 (SHPTASALSTGSPPMKNP), 1001–1018 (SHPTASALSTGSPPMKNP), 1019–1036 (SHPTASTLSMGLPPSRTP), and 1037–1054 (SHPTATVLSTGSPPSESP). The 5 X 18 AA tandem repeats of S-[HP]-[AP]-T-[AT]-[GST]-[ATV]-L-S-[MT]-G-[LS]-P-P-[MRS]-[EKR]-[NST]-P stretch occupies residues 965-1054 (SPATTGALST…STGSPPSESP (90 aa)). Ser-994 carries the post-translational modification Phosphoserine. Position 1053 is a phosphoserine (Ser-1053). Low complexity predominate over residues 1053-1067 (SPSRTGSAASGSSDS). The segment at 1123-1201 (ERVKEVVLKE…CGQVLVEDSC (79 aa)) is CRY binding domain.

As to quaternary structure, homodimer. Component of the circadian core oscillator, which includes the CRY proteins, CLOCK or NPAS2, BMAL1 or BMAL2, CSNK1D and/or CSNK1E, TIMELESS and the PER proteins. Interacts directly with PER1, PER2, CRY1, CRY2, and TIMELESS; interaction with CRY1 and CRY2 is weak and not rhythmic. Interacts with FBXW11 and BTRC. Phosphorylation by CSNK1E is weak and appears to require association with PER1 and translocation to the nucleus. Post-translationally, ubiquitinated.

Its subcellular location is the cytoplasm. It localises to the nucleus. Its function is as follows. Originally described as a core component of the circadian clock. The circadian clock, an internal time-keeping system, regulates various physiological processes through the generation of approximately 24 hour circadian rhythms in gene expression, which are translated into rhythms in metabolism and behavior. It is derived from the Latin roots 'circa' (about) and 'diem' (day) and acts as an important regulator of a wide array of physiological functions including metabolism, sleep, body temperature, blood pressure, endocrine, immune, cardiovascular, and renal function. Consists of two major components: the central clock, residing in the suprachiasmatic nucleus (SCN) of the brain, and the peripheral clocks that are present in nearly every tissue and organ system. Both the central and peripheral clocks can be reset by environmental cues, also known as Zeitgebers (German for 'timegivers'). The predominant Zeitgeber for the central clock is light, which is sensed by retina and signals directly to the SCN. The central clock entrains the peripheral clocks through neuronal and hormonal signals, body temperature and feeding-related cues, aligning all clocks with the external light/dark cycle. Circadian rhythms allow an organism to achieve temporal homeostasis with its environment at the molecular level by regulating gene expression to create a peak of protein expression once every 24 hours to control when a particular physiological process is most active with respect to the solar day. Transcription and translation of core clock components (CLOCK, NPAS2, BMAL1, BMAL2, PER1, PER2, PER3, CRY1 and CRY2) plays a critical role in rhythm generation, whereas delays imposed by post-translational modifications (PTMs) are important for determining the period (tau) of the rhythms (tau refers to the period of a rhythm and is the length, in time, of one complete cycle). A diurnal rhythm is synchronized with the day/night cycle, while the ultradian and infradian rhythms have a period shorter and longer than 24 hours, respectively. Disruptions in the circadian rhythms contribute to the pathology of cardiovascular diseases, cancer, metabolic syndromes and aging. A transcription/translation feedback loop (TTFL) forms the core of the molecular circadian clock mechanism. Transcription factors, CLOCK or NPAS2 and BMAL1 or BMAL2, form the positive limb of the feedback loop, act in the form of a heterodimer and activate the transcription of core clock genes and clock-controlled genes (involved in key metabolic processes), harboring E-box elements (5'-CACGTG-3') within their promoters. The core clock genes: PER1/2/3 and CRY1/2 which are transcriptional repressors form the negative limb of the feedback loop and interact with the CLOCK|NPAS2-BMAL1|BMAL2 heterodimer inhibiting its activity and thereby negatively regulating their own expression. This heterodimer also activates nuclear receptors NR1D1, NR1D2, RORA, RORB and RORG, which form a second feedback loop and which activate and repress BMAL1 transcription, respectively. Has a redundant role with the other PER proteins PER1 and PER2 and is not essential for the circadian rhythms maintenance. In contrast, plays an important role in sleep-wake timing and sleep homeostasis probably through the transcriptional regulation of sleep homeostasis-related genes, without influencing circadian parameters. Can bind heme. The chain is Period circadian protein homolog 3 (PER3) from Homo sapiens (Human).